We begin with the raw amino-acid sequence, 670 residues long: Probable beta-glucosidase N (670 aa).

Positions 1-21 are cleaved as a signal peptide; the sequence is MHSNILPVLTSVATLLGLVQG. The N-linked (GlcNAc...) asparagine glycan is linked to asparagine 51. Residues 65-87 are disordered; that stretch reads FEPSDGVRSVQGSGKDYDNPAMR. A glycan (N-linked (GlcNAc...) asparagine) is linked at asparagine 141. Aspartate 152 is a catalytic residue. N-linked (GlcNAc...) asparagine glycans are attached at residues asparagine 184, asparagine 248, asparagine 330, and asparagine 417.

This sequence belongs to the glycosyl hydrolase 3 family.

It is found in the secreted. It carries out the reaction Hydrolysis of terminal, non-reducing beta-D-glucosyl residues with release of beta-D-glucose.. Its pathway is glycan metabolism; cellulose degradation. Beta-glucosidases are one of a number of cellulolytic enzymes involved in the degradation of cellulosic biomass. Catalyzes the last step releasing glucose from the inhibitory cellobiose. This Emericella nidulans (strain FGSC A4 / ATCC 38163 / CBS 112.46 / NRRL 194 / M139) (Aspergillus nidulans) protein is Probable beta-glucosidase N (bglN).